Reading from the N-terminus, the 500-residue chain is L-arabinose isomerase (500 aa).

Residues glutamate 306, glutamate 333, histidine 350, and histidine 450 each coordinate Mn(2+).

Belongs to the arabinose isomerase family. In terms of assembly, homohexamer. It depends on Mn(2+) as a cofactor.

It carries out the reaction beta-L-arabinopyranose = L-ribulose. It functions in the pathway carbohydrate degradation; L-arabinose degradation via L-ribulose; D-xylulose 5-phosphate from L-arabinose (bacterial route): step 1/3. Functionally, catalyzes the conversion of L-arabinose to L-ribulose. In Yersinia pestis (strain Pestoides F), this protein is L-arabinose isomerase.